The chain runs to 445 residues: GRAM domain-containing protein 2B (445 aa).

Methionine 1 carries the N-acetylmethionine modification. A disordered region spans residues 1–118 (MVKKRLSSSD…ERKKSSSSSQ (118 aa)). 2 stretches are compositionally biased toward polar residues: residues 18 to 44 (PSNSKTSAEAPHSSTDSPSSVFLSSEA) and 56 to 68 (KSPTAQSPTSSVE). The segment covering 82 to 93 (SKSSFDGSSLLS) has biased composition (low complexity). Residues 94-112 (DKNDCKTESKTDSKTERKK) show a composition bias toward basic and acidic residues. Residues 123–190 (MHFHKLFLDV…FSVTLIKKTK (68 aa)) form the GRAM domain. Polar residues predominate over residues 233–246 (TSVGNSPNPSSAEN). The segment at 233–252 (TSVGNSPNPSSAENSFRADR) is disordered. A phosphoserine mark is found at serine 238, serine 255, and serine 265. Positions 277–331 (DLEGYSSSGSQTPESENSRDFHVTESQTVLNVTKGETKPPRTDAHGSRAPDGKAK) are disordered. Over residues 281 to 291 (YSSSGSQTPES) the composition is skewed to polar residues. The segment covering 311 to 330 (GETKPPRTDAHGSRAPDGKA) has biased composition (basic and acidic residues).

The sequence is that of GRAM domain-containing protein 2B (Gramd2b) from Mus musculus (Mouse).